The sequence spans 475 residues: GlcNAc-binding protein A (475 aa).

An N-terminal signal peptide occupies residues 1-27; the sequence is MPKLTQLSLVTLALTAGSTLVSQTASA. The Chitin-binding type-4 domain occupies 28-195; it reads HGYVVSPESR…SFYNAIDVNF (168 aa). The 43-residue stretch at 426–468 folds into the Chitin-binding type-3 domain; the sequence is AGTKVLQPKTGKVYQCKPWPYNGYCVQWSPTATGFEPGIGNSW.

Belongs to the GbpA family.

It is found in the secreted. Its function is as follows. Probably interacts with GlcNAc residues. May promote attachment to both epithelial cell surfaces and chitin. In Shewanella oneidensis (strain ATCC 700550 / JCM 31522 / CIP 106686 / LMG 19005 / NCIMB 14063 / MR-1), this protein is GlcNAc-binding protein A.